A 173-amino-acid chain; its full sequence is Chorion protein S19 (173 aa).

A signal peptide spans 1–21 (MNKFATLAVIFCACIVGSCYA).

Belongs to the chorion protein S19 family.

The protein resides in the secreted. Functionally, chorion membrane (egg shell) protein; plays a role in protecting the egg from the environment. This is Chorion protein S19 (Cp19) from Drosophila melanogaster (Fruit fly).